A 915-amino-acid polypeptide reads, in one-letter code: Protein inturned (915 aa).

The tract at residues 88-144 (NAKRQANSSNKSEAKLKKLTKILRRKRRPSQRKAEGKDSSQRPASILKNQAGQRPGV) is disordered. Over residues 104-118 (KKLTKILRRKRRPSQ) the composition is skewed to basic residues. Residues 128-139 (QRPASILKNQAG) are compositionally biased toward polar residues. One can recognise a PDZ domain in the interval 165 to 253 (SVSSSSADRG…PMQVRLTLET (89 aa)). The interval 688–738 (GIRGRRASPQRSQSDSGSEGHADGTPASVARRDSLGSGGSDGSLGSAGFLK) is disordered.

The protein belongs to the inturned family.

It localises to the cytoplasm. It is found in the cell surface. The protein localises to the cytoskeleton. Its subcellular location is the cilium basal body. In terms of biological role, plays a key role in ciliogenesis and embryonic development. Regulator of cilia formation by controlling the organization of the apical actin cytoskeleton and the positioning of the basal bodies at the apical cell surface, which in turn is essential for the normal orientation of elongating ciliary microtubules. Plays a key role in definition of cell polarity via its role in ciliogenesis but not via conversion extension. Has an indirect effect on hedgehog signaling. The sequence is that of Protein inturned (intu) from Danio rerio (Zebrafish).